A 584-amino-acid polypeptide reads, in one-letter code: Inactive metallocarboxypeptidase ECM14 (584 aa).

Positions 1-20 (MHLLPVITAVALIYTPLASA) are cleaved as a signal peptide. Positions 21-174 (VPSSSNPQFP…QAVYESYPQP (154 aa)) are excised as a propeptide. Residues 202 to 524 (DYQPLSVMTP…NAVLEFGKFL (323 aa)) form the Peptidase M14 domain. Positions 267 and 270 each coordinate Zn(2+). Residues 267–270 (HARE), R325, and 342–343 (DR) each bind substrate. C336 and C359 are oxidised to a cystine. N383 and N389 each carry an N-linked (GlcNAc...) asparagine glycan. Residue H399 coordinates Zn(2+). 400–401 (SY) is a substrate binding site. The segment at 564–584 (QQLDDEDGEADSHWVLRTQRS) is disordered.

The protein belongs to the peptidase M14 family. Zn(2+) serves as cofactor.

Its subcellular location is the vacuole. It localises to the secreted. Functionally, inactive carboxypeptidase that may play a role in cell wall organization and biogenesis. The sequence is that of Inactive metallocarboxypeptidase ECM14 (ECM14) from Uncinocarpus reesii (strain UAMH 1704).